A 153-amino-acid polypeptide reads, in one-letter code: MPLLLSGKEFRDDLESACCLAIQTPLEGGAETRLLRRLKAAGYRTQITSVRGFGDPEVFLLKLHGIRPPHLGHQNIGRNGALGEVQEVIPQLHELLSEEQPLALWLLEGQVLSRSELLALCDLSEKDPQLKIVVEMGGERKLKWQSMRKFLEQ.

This sequence belongs to the complex I NdhN subunit family. NDH-1 can be composed of about 15 different subunits; different subcomplexes with different compositions have been identified which probably have different functions.

The protein localises to the cellular thylakoid membrane. The enzyme catalyses a plastoquinone + NADH + (n+1) H(+)(in) = a plastoquinol + NAD(+) + n H(+)(out). The catalysed reaction is a plastoquinone + NADPH + (n+1) H(+)(in) = a plastoquinol + NADP(+) + n H(+)(out). In terms of biological role, NDH-1 shuttles electrons from an unknown electron donor, via FMN and iron-sulfur (Fe-S) centers, to quinones in the respiratory and/or the photosynthetic chain. The immediate electron acceptor for the enzyme in this species is believed to be plastoquinone. Couples the redox reaction to proton translocation, and thus conserves the redox energy in a proton gradient. Cyanobacterial NDH-1 also plays a role in inorganic carbon-concentration. The protein is NAD(P)H-quinone oxidoreductase subunit N of Prochlorococcus marinus (strain MIT 9211).